Reading from the N-terminus, the 493-residue chain is Leucine-rich repeat-containing protein 14 (493 aa).

The stretch at 111 to 146 (KHTLRVLDMTGLLDDGVEQDPGTMSMWDCTAAVART) is one LRR 1; degenerate repeat. An LRR 2; degenerate repeat occupies 194 to 218 (RLCCRDLRAEDLPMRNTVALLQLLD). Residues 219-246 (AGCLRRVDLRFNNLGLRGLSVIIPHVAR) form an LRR 3; degenerate repeat. One copy of the LRR 4; degenerate repeat lies at 247 to 282 (FQHLASLRLHYVHGDSRQPSVDGEDNFRYFLAQMGR). 5 LRR repeats span residues 283–307 (FTCL…LSTL), 308–339 (QSPL…VHLK), 340–360 (KLDL…QGLL), 364–391 (AATL…VLTR), and 392–416 (CASL…LLRD).

This sequence belongs to the PRAME family. LRRC14 subfamily. As to quaternary structure, interacts with IKBKB; disrupts IKBKB-IKBKG interaction preventing I-kappa-B-kinase (IKK) core complex formation and leading to a decrease of IKBKB phosphorylation and NF-kappaB activation. Interacts with CHUK.

The protein localises to the cytoplasm. Its function is as follows. Negatively regulates Toll-like receptor-mediated NF-kappa-B signaling by disrupting IKK core complex formation through interaction with IKBKB. This Bos taurus (Bovine) protein is Leucine-rich repeat-containing protein 14.